The following is a 589-amino-acid chain: NADP-dependent malic enzyme (589 aa).

Tyr-137 functions as the Proton donor in the catalytic mechanism. Arg-190 serves as a coordination point for NAD(+). Lys-208 serves as the catalytic Proton acceptor. Positions 280, 281, and 304 each coordinate a divalent metal cation. Asp-304 contributes to the NAD(+) binding site. NADP(+) is bound at residue 333–349 (LFLGAGEAGTGIAELIA). Residue Asn-445 participates in NAD(+) binding.

This sequence belongs to the malic enzymes family. In terms of assembly, homotetramer. Mg(2+) is required as a cofactor. It depends on Mn(2+) as a cofactor.

The protein localises to the cytoplasm. The enzyme catalyses (S)-malate + NADP(+) = pyruvate + CO2 + NADPH. It catalyses the reaction oxaloacetate + H(+) = pyruvate + CO2. The sequence is that of NADP-dependent malic enzyme (ME1) from Phaseolus vulgaris (Kidney bean).